Reading from the N-terminus, the 358-residue chain is MIQNVTDDKIQWKCLESKIESQRIHYGRFAIAPLKKGQANTLGITLRRTLLSDLDGICITSVKIDNIKHEYCTLTGVRESIQDILLNLKEIVFKGVCDKTQKGFIFVKGPKKITASDIQIEPCIEILDSNQIIAHLTEPIDFKVELTIEKSMGFRLQNATQISKDSFSIDAIFMPIRNVNYSIHPVEKAGDWKSELLILEIWTNGSITPKEAFHQASEKIMNIFLSLSNSSDNQIQEKSTKNFEEKEEFIFQNIDGFKQDKETKVQESLGWKKISINQLELSARAYNCLKNEKISTLFDLLNYSQEDLLKIKNFGKRSFEQVVNALEKHFDMKLSKDSSKKFYEQLKNLELINNKDIS.

An alpha N-terminal domain (alpha-NTD) region spans residues 1–231 (MIQNVTDDKI…NIFLSLSNSS (231 aa)). The segment at 266–358 (QESLGWKKIS…LELINNKDIS (93 aa)) is alpha C-terminal domain (alpha-CTD).

It belongs to the RNA polymerase alpha chain family. In terms of assembly, in plastids the minimal PEP RNA polymerase catalytic core is composed of four subunits: alpha, beta, beta', and beta''. When a (nuclear-encoded) sigma factor is associated with the core the holoenzyme is formed, which can initiate transcription.

Its subcellular location is the plastid. The protein localises to the chloroplast. It carries out the reaction RNA(n) + a ribonucleoside 5'-triphosphate = RNA(n+1) + diphosphate. Its function is as follows. DNA-dependent RNA polymerase catalyzes the transcription of DNA into RNA using the four ribonucleoside triphosphates as substrates. This Chara vulgaris (Common stonewort) protein is DNA-directed RNA polymerase subunit alpha.